We begin with the raw amino-acid sequence, 577 residues long: MNIQALINDKVSQALEAAGAPAGSPAAVRQSAKPQFGDYQANGVMGVAKKLGTNPREFAQKVLDVLDLDGIASKTEIAGPGFINIFLSEEFLAKQAEAALADSRLGVAADEAQTIVADYSAPNVAKEMHVGHLRSTIIGDAVVRTLEFLGHKVIRANHIGDWGTQFGMLIANLERVQQESGEVSMELADLEGFYRESKKLYDEDEEFAVKARNYVVKLQSGDEFCAEMWKKLVDVTMIQNQRNYDRLNVSLSRDDVMGESMYNDMLPKIVADLKAQGLAVEDDGAQVVFLEEFKNKDGEAMGVIVQKRDGGFLYTTTDIACAKYRYEELGADRVLYFIDSRQHQHLMQAWTIVRKAGYVPESVSLEHHAFGMMLGKDGKPFKTRAGGTVRLADLLDEAEVRAAQLIESKNPELAEDEKKAIANTVAMAAVKYADLSKHRTTDYVFDWDNMLAFEGNTAPYMQYAYTRVASVFAKAGVSMDDLQGEIKITDEKEKALIAKLMQFEEAVQSVAREGQPHIMCSYLFELAGQFSSFYEACPILVAEDEAVKQSRLKLAALTAKTIKQGLSLLGIDTLERM.

Positions 122 to 132 (PNVAKEMHVGH) match the 'HIGH' region motif.

It belongs to the class-I aminoacyl-tRNA synthetase family. Monomer.

It localises to the cytoplasm. It carries out the reaction tRNA(Arg) + L-arginine + ATP = L-arginyl-tRNA(Arg) + AMP + diphosphate. This chain is Arginine--tRNA ligase, found in Vibrio campbellii (strain ATCC BAA-1116).